Here is a 333-residue protein sequence, read N- to C-terminus: Gap junction alpha-4 protein (333 aa).

Residues 1 to 20 lie on the Cytoplasmic side of the membrane; that stretch reads MGDWGFLEKLLDQVQEHSTV. Residues 21-40 form a helical membrane-spanning segment; that stretch reads VGKIWLTVLFIFRILILGLA. The Extracellular segment spans residues 41–76; that stretch reads GESVWGDEQSDFECNTAQPGCTNVCYDQAFPISHIR. The chain crosses the membrane as a helical span at residues 77 to 99; that stretch reads YWVLQFLFVSTPTLVYLGHVIYL. The Cytoplasmic segment spans residues 100 to 148; the sequence is SRREERLRQKEGELRALPAKDPRVERALASIERQMAKISVAEDGHLRIR. Residues 149-165 traverse the membrane as a helical segment; sequence GALMGTYVASVLCKSVL. Residues 166-207 are Extracellular-facing; the sequence is EAGFLYGQWRLYGWTMEPVFVCQRSPCPYLVDCFVSRPTEKT. Residues 208–230 form a helical membrane-spanning segment; the sequence is IFIIFMLVVGLISLVLNLLELAY. At 231-333 the chain is on the cytoplasmic side; sequence LLCRCLSRGV…SSSASKKQYV (103 aa). Residues 303-333 form a disordered region; sequence SRAPLFLDPPPQTGRKSPSRPSSSASKKQYV. Residues 317–333 show a composition bias toward low complexity; it reads RKSPSRPSSSASKKQYV.

The protein belongs to the connexin family. Alpha-type (group II) subfamily. As to quaternary structure, a connexon is composed of a hexamer of connexins.

Its subcellular location is the cell membrane. It localises to the cell junction. The protein resides in the gap junction. Functionally, one gap junction consists of a cluster of closely packed pairs of transmembrane channels, the connexons, through which materials of low MW diffuse from one cell to a neighboring cell. The sequence is that of Gap junction alpha-4 protein (GJA4) from Bos taurus (Bovine).